Reading from the N-terminus, the 348-residue chain is Actin maturation protease (348 aa).

Residues M1–T18 show a composition bias toward pro residues. Positions M1–F64 are disordered. Over residues N34 to S48 the composition is skewed to low complexity. The segment covering V49–R60 has biased composition (pro residues). A peptidase C39-like region spans residues S121–G241. C129 is an active-site residue. S313 carries the phosphoserine modification.

Belongs to the ACTMAP family. Interacts (via N-terminus) with PFN2; the interaction may facilitate efficient cleavage of the acetylated N-terminus of immature actin. Interacts with PFN1.

It localises to the cytoplasm. It carries out the reaction N-terminal N(alpha)-acetyl-L-methionyl-L-aspartyl-[protein] + H2O = N-terminal L-aspartyl-[protein] + N-acetyl-L-methionine. It catalyses the reaction N-terminal N(alpha)-acetyl-L-methionyl-L-glutamyl-[protein] + H2O = N-terminal L-glutamyl-[protein] + N-acetyl-L-methionine. The catalysed reaction is N-terminal N(alpha)-acetyl-L-cysteinyl-L-aspartyl-[protein] + H2O = N-terminal L-aspartyl-[protein] + N-acetyl-L-cysteine. The enzyme catalyses N-terminal N(alpha)-acetyl-L-cysteinyl-L-glutamyl-[protein] + H2O = N-terminal L-glutamyl-[protein] + N-acetyl-L-cysteine. Actin maturation protease that specifically mediates the cleavage of immature acetylated N-terminal actin, thereby contributing to actin maturation. Cleaves N-terminal acetylated methionine of immature cytoplasmic beta- and gamma-actins ACTB and ACTG1 after translation. Cleaves N-terminal acetylated cysteine of muscle alpha-actins ACTA1, ACTC1 and ACTA2 after canonical removal of N-terminal methionine. This Bos taurus (Bovine) protein is Actin maturation protease.